Here is a 165-residue protein sequence, read N- to C-terminus: UPF0763 protein NIS_0363 (165 aa).

This sequence belongs to the UPF0763 family.

The sequence is that of UPF0763 protein NIS_0363 from Nitratiruptor sp. (strain SB155-2).